A 354-amino-acid polypeptide reads, in one-letter code: MLKNDRLLRALNRQPVDRTPVWLMRQAGRYLPEYRATRARAGSFLGMAKNPDIACEVTLQPLQRFPLDAAILFSDILTIPDAMGLELYFVEGEGPKFRHPVRDAAAIHRLGVPDMETELRYVMDAVRVIRRELDGSVPLIGFSGSPWTLACYMIEGGGSKEYARIKAMAFNAPELLHHLLGTVTDAVIAYLAAQRAAGAQALQVFDTWGGVLSPAMYREFSLPYLTRIARELERGTGAERTPLVLFGKGNGAYVADLAASGAEAVGVDWTISLADAAQRAGGRVALQGNLDPATLYGSPDAIRSEVAKTLDSYAQGNGGSREGHVFNLGHGMSPDMNPEHVGVLVEAVQSLSKR.

Substrate is bound by residues 25-29, aspartate 75, tyrosine 152, threonine 207, and histidine 330; that span reads RQAGR.

This sequence belongs to the uroporphyrinogen decarboxylase family. Homodimer.

It is found in the cytoplasm. It carries out the reaction uroporphyrinogen III + 4 H(+) = coproporphyrinogen III + 4 CO2. Its pathway is porphyrin-containing compound metabolism; protoporphyrin-IX biosynthesis; coproporphyrinogen-III from 5-aminolevulinate: step 4/4. In terms of biological role, catalyzes the decarboxylation of four acetate groups of uroporphyrinogen-III to yield coproporphyrinogen-III. This Xanthomonas euvesicatoria pv. vesicatoria (strain 85-10) (Xanthomonas campestris pv. vesicatoria) protein is Uroporphyrinogen decarboxylase.